A 310-amino-acid chain; its full sequence is Porphobilinogen deaminase (310 aa).

S-(dipyrrolylmethanemethyl)cysteine is present on C243.

This sequence belongs to the HMBS family. In terms of assembly, monomer. Dipyrromethane is required as a cofactor.

The enzyme catalyses 4 porphobilinogen + H2O = hydroxymethylbilane + 4 NH4(+). The protein operates within porphyrin-containing compound metabolism; protoporphyrin-IX biosynthesis; coproporphyrinogen-III from 5-aminolevulinate: step 2/4. Its function is as follows. Tetrapolymerization of the monopyrrole PBG into the hydroxymethylbilane pre-uroporphyrinogen in several discrete steps. This is Porphobilinogen deaminase from Mannheimia succiniciproducens (strain KCTC 0769BP / MBEL55E).